The following is a 350-amino-acid chain: MIKKMATEDLDRFGEKIIEGFQLSDDDLRALLSLESEEELEKLYYVARKVRNHYFGNRVFLNCFIYFSTYCKNQCAFCYYNCKNEINRYRLSREEIKETCKALKGAGFHMIDLTMGEDPYYYEEPDRFVELVQMVKNELGLPIMISPGVMDNATLLKAREKGANFFALYQETYDQELYEKLRVGQSFKGRYNTRRFAKEQGYCIEDGILTGVGNDIESTIKSLRGMKSNDPDMVRVMTFLPQEGTPLERFKENSNLSELKIIAILRLIFPKCLIPASLDLEGIDGMVHRLNAGANIVTSILPSDSKLEGVANYDRDLEERDRDIKSVIKRLEGMGMEPAPQAEFETVLRC.

In terms of domain architecture, Radical SAM core spans 57–279 (NRVFLNCFIY…PKCLIPASLD (223 aa)). Residues Cys-71 and Cys-75 each coordinate [4Fe-4S] cluster. Phe-77 contacts S-adenosyl-L-methionine. Residue Cys-78 coordinates [4Fe-4S] cluster. Residues Asp-112, Ser-146, and Tyr-169 each coordinate (3R)-3-methyl-D-ornithine. The S-adenosyl-L-methionine site is built by Glu-171, Arg-182, and Arg-190. A (3R)-3-methyl-D-ornithine-binding site is contributed by Arg-235. S-adenosyl-L-methionine is bound by residues Leu-240 and Gln-242. Residues Ser-277, Thr-298, and Ser-299 each contribute to the (3R)-3-methyl-D-ornithine site.

The protein belongs to the radical SAM superfamily. PylB family. Requires [4Fe-4S] cluster as cofactor. S-adenosyl-L-methionine is required as a cofactor.

It carries out the reaction L-lysine = (3R)-3-methyl-D-ornithine. Its pathway is amino-acid biosynthesis; L-pyrrolysine biosynthesis. Its function is as follows. Catalyzes the isomerization of L-lysine to (3R)-3-methyl-D-ornithine via a radical-based mechanism. Is required for the biosynthesis of pyrrolysine. The protein is 3-methylornithine synthase (pylB) of Methanosarcina acetivorans (strain ATCC 35395 / DSM 2834 / JCM 12185 / C2A).